Here is a 134-residue protein sequence, read N- to C-terminus: ATP synthase epsilon chain, chloroplastic (134 aa).

It belongs to the ATPase epsilon chain family. F-type ATPases have 2 components, CF(1) - the catalytic core - and CF(0) - the membrane proton channel. CF(1) has five subunits: alpha(3), beta(3), gamma(1), delta(1), epsilon(1). CF(0) has three main subunits: a, b and c.

Its subcellular location is the plastid. It is found in the chloroplast thylakoid membrane. Produces ATP from ADP in the presence of a proton gradient across the membrane. The polypeptide is ATP synthase epsilon chain, chloroplastic (Amborella trichopoda).